The sequence spans 458 residues: MSSGRIVQIIGAVIDVEFPRDAVPSVYNALKVQGAETTLEVQQQLGDGVVRTIAMGSTEGLKRGLDVVDTKAAISVPVGKATLGRIMDVLGNPIDEAGPIGEEERRGIHRKAPSFAEQAGGNDLLETGIKVIDLVCPFAKGGKVGLFGGAGVGKTVNMMELIRNIAIEHSGYSVFAGVGERTREGNDFYHEMKDSNVLDKVALVYGQMNEPPGNRLRVALTGLTMAEKFRDEGNDVLLFVDNIYRYTLAGTEVSALLGRMPSAVGYQPTLAEEMGVLQERITSTKEGSITSIQAVYVPADDLTDPSPATTFAHLDATVVLSRDIASLGIYPAVDPLDSTSRQLDPNVIGNEHYETARQVQYVLQRYKELKDIIAILGMDELSETDKQLVARARKIQRFLSQPFFVAEVFTGSPGKYVSLKDTIAGFSGILKGDYDHLPEQAFYMVGSIDEAIEKAKKL.

148–155 (GGAGVGKT) provides a ligand contact to ATP.

The protein belongs to the ATPase alpha/beta chains family. As to quaternary structure, F-type ATPases have 2 components, CF(1) - the catalytic core - and CF(0) - the membrane proton channel. CF(1) has five subunits: alpha(3), beta(3), gamma(1), delta(1), epsilon(1). CF(0) has three main subunits: a(1), b(2) and c(9-12). The alpha and beta chains form an alternating ring which encloses part of the gamma chain. CF(1) is attached to CF(0) by a central stalk formed by the gamma and epsilon chains, while a peripheral stalk is formed by the delta and b chains.

It localises to the cell inner membrane. It carries out the reaction ATP + H2O + 4 H(+)(in) = ADP + phosphate + 5 H(+)(out). Functionally, produces ATP from ADP in the presence of a proton gradient across the membrane. The catalytic sites are hosted primarily by the beta subunits. This is ATP synthase subunit beta from Pseudomonas entomophila (strain L48).